Reading from the N-terminus, the 391-residue chain is Cell cycle checkpoint control protein RAD9A (391 aa).

Tyrosine 28 bears the Phosphotyrosine mark. Positions phenylalanine 51–glutamate 91 are possesses 3'-5' exonuclease activity. Residues serine 266 to glycine 391 are sufficient for interaction with ABL1. A compositionally biased stretch (basic and acidic residues) spans threonine 268–glutamine 282. Disordered stretches follow at residues threonine 268 to aspartate 301 and serine 319 to glycine 391. A phosphoserine mark is found at serine 272, serine 277, and serine 328. Serine 341 is modified (phosphoserine; by CK2). Residues serine 375 and serine 380 each carry the phosphoserine modification. The residue at position 387 (serine 387) is a Phosphoserine; by CK2.

It belongs to the rad9 family. Component of the toroidal 9-1-1 (RAD9-RAD1-HUS1) complex, composed of RAD9A, RAD1 and HUS1. The 9-1-1 complex associates with LIG1, POLB, FEN1, RAD17, HDAC1, RPA1 and RPA2. The 9-1-1 complex associates with the RAD17-RFC complex. RAD9A interacts with BCL2L1, FEN1, RAD9B, ABL1, RPA1, ATAD5 and RPA2. Interacts with DNAJC7. Interacts (when phosphorylated) with TOPBP1. Post-translationally, constitutively phosphorylated on serine and threonine amino acids in absence of DNA damage. Hyperphosphorylated by PRKCD and ABL1 upon DNA damage. Its phosphorylation by PRKCD may be required for the formation of the 9-1-1 complex. Phosphorylated at Ser-341 and Ser-387 by CK2, promoting interaction with TOPBP1.

The protein localises to the nucleus. It carries out the reaction Exonucleolytic cleavage in the 3'- to 5'-direction to yield nucleoside 5'-phosphates.. Component of the 9-1-1 cell-cycle checkpoint response complex that plays a major role in DNA repair. The 9-1-1 complex is recruited to DNA lesion upon damage by the RAD17-replication factor C (RFC) clamp loader complex. Acts then as a sliding clamp platform on DNA for several proteins involved in long-patch base excision repair (LP-BER). The 9-1-1 complex stimulates DNA polymerase beta (POLB) activity by increasing its affinity for the 3'-OH end of the primer-template and stabilizes POLB to those sites where LP-BER proceeds; endonuclease FEN1 cleavage activity on substrates with double, nick, or gap flaps of distinct sequences and lengths; and DNA ligase I (LIG1) on long-patch base excision repair substrates. The 9-1-1 complex is necessary for the recruitment of RHNO1 to sites of double-stranded breaks (DSB) occurring during the S phase. RAD9A possesses 3'-&gt;5' double stranded DNA exonuclease activity. This is Cell cycle checkpoint control protein RAD9A (RAD9A) from Homo sapiens (Human).